The sequence spans 735 residues: Zinc finger CCCH domain-containing protein 14 (735 aa).

Residue methionine 1 is modified to N-acetylmethionine. Positions 78-153 are disordered; it reads TEPSSLKSPD…RHSYDDGAST (76 aa). The residue at position 85 (serine 85) is a Phosphoserine. Glycyl lysine isopeptide (Lys-Gly) (interchain with G-Cter in SUMO2) cross-links involve residues lysine 99, lysine 139, lysine 175, and lysine 198. Over residues 131-144 the composition is skewed to polar residues; that stretch reads VSTSSQEQKSTNVR. At serine 240 the chain carries Phosphoserine. Residues lysine 245, lysine 283, and lysine 295 each participate in a glycyl lysine isopeptide (Lys-Gly) (interchain with G-Cter in SUMO2) cross-link. A disordered region spans residues 308 to 351; it reads FSHDGEEEEEDEDYGTRIGSLSSSVSVPAKPERRPSLPPSKQAN. 3 positions are modified to phosphoserine: serine 309, serine 327, and serine 343. Position 357 is an N6-acetyllysine; alternate (lysine 357). Lysine 357 participates in a covalent cross-link: Glycyl lysine isopeptide (Lys-Gly) (interchain with G-Cter in SUMO2); alternate. Residue lysine 378 forms a Glycyl lysine isopeptide (Lys-Gly) (interchain with G-Cter in SUMO2) linkage. Phosphoserine occurs at positions 390 and 409. Positions 399–431 are disordered; the sequence is VQGQNRAPRISPPVKEEEAKGDNTGKSQGTQQR. Positions 412-421 are enriched in basic and acidic residues; it reads VKEEEAKGDN. Lysine 413 participates in a covalent cross-link: Glycyl lysine isopeptide (Lys-Gly) (interchain with G-Cter in SUMO2). Positions 422-431 are enriched in polar residues; sequence TGKSQGTQQR. Residue lysine 489 forms a Glycyl lysine isopeptide (Lys-Gly) (interchain with G-Cter in SUMO2) linkage. 4 positions are modified to phosphoserine: serine 498, serine 515, serine 527, and serine 620. 5 consecutive C3H1-type zinc fingers follow at residues 595–620, 621–640, 641–656, 681–698, and 700–718; these read EKLLERCKYWPACKNGDECVYHHPIS, PCKAFPNCKFAEKCLFVHPN, CKYDTKCTKADCPFTH, CRYFPACKKMECPFYHPK, and CRFNTQCTRPDCTFYHPTI.

The protein belongs to the ZC3H14 family. As to quaternary structure, homodimer; facilitating circular RNAs (circRNAs) formation. Associates with the spliceosome. Interacts with HOOK2. Interacts with ZFC3H1 in a RNase-sensitive manner. As to expression, expressed in hippocampal pyramidal neurons (at protein level). Expressed in kidney, liver, muscle, heart brain and testes. Expressed in hippocampal pyramidal neurons.

Its subcellular location is the nucleus speckle. In terms of biological role, RNA-binding protein involved in the biogenesis of circular RNAs (circRNAs), which are produced by back-splicing circularization of pre-mRNAs. Acts by binding to both exon-intron boundary and 3'-UTR of pre-mRNAs to promote circRNA biogenesis through dimerization and the association with the spliceosome. Required for spermatogenesis via involvement in circRNA biogenesis. Regulates the pre-mRNA processing of ATP5MC1; preventing its degradation. Also binds the poly(A) tail of mRNAs; controlling poly(A) length in neuronal cells. This is Zinc finger CCCH domain-containing protein 14 from Mus musculus (Mouse).